The chain runs to 160 residues: Cyclic pyranopterin monophosphate synthase (160 aa).

Substrate is bound by residues 77-79 and 114-115; these read MCH and ME. The active site involves Asp-129.

Belongs to the MoaC family. Homohexamer; trimer of dimers.

The catalysed reaction is (8S)-3',8-cyclo-7,8-dihydroguanosine 5'-triphosphate = cyclic pyranopterin phosphate + diphosphate. The protein operates within cofactor biosynthesis; molybdopterin biosynthesis. Its function is as follows. Catalyzes the conversion of (8S)-3',8-cyclo-7,8-dihydroguanosine 5'-triphosphate to cyclic pyranopterin monophosphate (cPMP). The protein is Cyclic pyranopterin monophosphate synthase of Listeria monocytogenes serovar 1/2a (strain ATCC BAA-679 / EGD-e).